Consider the following 275-residue polypeptide: Uroporphyrinogen-III synthase (275 aa).

It belongs to the uroporphyrinogen-III synthase family.

It carries out the reaction hydroxymethylbilane = uroporphyrinogen III + H2O. The protein operates within porphyrin-containing compound metabolism; protoporphyrin-IX biosynthesis; coproporphyrinogen-III from 5-aminolevulinate: step 3/4. In terms of biological role, catalyzes cyclization of the linear tetrapyrrole, hydroxymethylbilane, to the macrocyclic uroporphyrinogen III, the fourth step in the heme biosynthetic pathway. This chain is Uroporphyrinogen-III synthase, found in Saccharomyces cerevisiae (strain ATCC 204508 / S288c) (Baker's yeast).